The chain runs to 92 residues: UPF0250 protein Avin_08440 (92 aa).

It belongs to the UPF0250 family.

This Azotobacter vinelandii (strain DJ / ATCC BAA-1303) protein is UPF0250 protein Avin_08440.